Here is a 165-residue protein sequence, read N- to C-terminus: Lipoprotein signal peptidase (165 aa).

Transmembrane regions (helical) follow at residues 12 to 32 (WLWVVVAVLIIDLGSKFLILQ), 70 to 90 (WFFAGIAVGICVVLAVLMYRS), and 102 to 122 (ALIIGGALGNLFDRLWHGFVV). Catalysis depends on residues Asp123 and Asp141. The chain crosses the membrane as a helical span at residues 137 to 157 (FNLADSAICIGAALIVLEGFL).

It belongs to the peptidase A8 family.

The protein resides in the cell inner membrane. It catalyses the reaction Release of signal peptides from bacterial membrane prolipoproteins. Hydrolyzes -Xaa-Yaa-Zaa-|-(S,diacylglyceryl)Cys-, in which Xaa is hydrophobic (preferably Leu), and Yaa (Ala or Ser) and Zaa (Gly or Ala) have small, neutral side chains.. It functions in the pathway protein modification; lipoprotein biosynthesis (signal peptide cleavage). Its function is as follows. This protein specifically catalyzes the removal of signal peptides from prolipoproteins. The protein is Lipoprotein signal peptidase of Klebsiella aerogenes (strain ATCC 13048 / DSM 30053 / CCUG 1429 / JCM 1235 / KCTC 2190 / NBRC 13534 / NCIMB 10102 / NCTC 10006 / CDC 819-56) (Enterobacter aerogenes).